Here is a 102-residue protein sequence, read N- to C-terminus: NADH-quinone oxidoreductase subunit K (102 aa).

3 consecutive transmembrane segments (helical) span residues 3 to 23 (IGLT…AFGI), 31 to 51 (IVLL…LVAF), and 66 to 86 (FILT…VVYF).

The protein belongs to the complex I subunit 4L family. NDH-1 is composed of 14 different subunits. Subunits NuoA, H, J, K, L, M, N constitute the membrane sector of the complex.

It is found in the cell inner membrane. The enzyme catalyses a quinone + NADH + 5 H(+)(in) = a quinol + NAD(+) + 4 H(+)(out). Functionally, NDH-1 shuttles electrons from NADH, via FMN and iron-sulfur (Fe-S) centers, to quinones in the respiratory chain. The immediate electron acceptor for the enzyme in this species is believed to be ubiquinone. Couples the redox reaction to proton translocation (for every two electrons transferred, four hydrogen ions are translocated across the cytoplasmic membrane), and thus conserves the redox energy in a proton gradient. This chain is NADH-quinone oxidoreductase subunit K, found in Rhodospirillum centenum (strain ATCC 51521 / SW).